A 164-amino-acid chain; its full sequence is MLELDLQLATEAPAPSEAQFREWCALALRQRTADSELTIRLVDEPEGRELNHTWRQKDYATNVLSFPADVPDELLDIPLLGDLVICVEVVEREAKEQGKELEAHWAHLVIHGCLHLLGYDHIDDDEAEEMETLEQTLLAELGHPDPYADDDAQKHSTVTIKDSE.

Residues histidine 111, histidine 115, and histidine 121 each contribute to the Zn(2+) site. The disordered stretch occupies residues 140–164; it reads ELGHPDPYADDDAQKHSTVTIKDSE. Residues 155-164 show a composition bias toward polar residues; that stretch reads HSTVTIKDSE.

This sequence belongs to the endoribonuclease YbeY family. Zn(2+) is required as a cofactor.

Its subcellular location is the cytoplasm. Single strand-specific metallo-endoribonuclease involved in late-stage 70S ribosome quality control and in maturation of the 3' terminus of the 16S rRNA. The polypeptide is Endoribonuclease YbeY (Pseudomonas fluorescens (strain SBW25)).